The primary structure comprises 362 residues: MNAHTAGGHALRHDWTLSEVQALFALPFNDLLFQAQTIHRAHFDPNEVQVSTLLSIKTGACPEDCKYCPQSARYHTGLETERLMEVEKVLERAREARANGSSRFCMGAAWRNPKERDMPYILRMIEEVRGLGMETCMTLGMLTADQAARLGAAGLDYYNHNLDTSPEFYGEIISTRTYQDRLDTLEHVRGAGMKVCSGGIVGMGEQAKDRAGLLMALANLPRHPESVPINMLVKVKGTPLENEANLDSFEFIRTIAVARIMMPASHVRLSAGREKMNEQMQAMCFMAGANSIFYGCKLLTTPNPDENSDMQLFKRLGIRPAQRAQKPDQIQEEEILAEVSRQNAPDEMFYDATRPRAGVARS.

Positions 46–273 constitute a Radical SAM core domain; that stretch reads NEVQVSTLLS…ASHVRLSAGR (228 aa). C61, C65, and C68 together coordinate [4Fe-4S] cluster. 4 residues coordinate [2Fe-2S] cluster: C105, C136, C196, and R268.

It belongs to the radical SAM superfamily. Biotin synthase family. Homodimer. Requires [4Fe-4S] cluster as cofactor. It depends on [2Fe-2S] cluster as a cofactor.

The catalysed reaction is (4R,5S)-dethiobiotin + (sulfur carrier)-SH + 2 reduced [2Fe-2S]-[ferredoxin] + 2 S-adenosyl-L-methionine = (sulfur carrier)-H + biotin + 2 5'-deoxyadenosine + 2 L-methionine + 2 oxidized [2Fe-2S]-[ferredoxin]. The protein operates within cofactor biosynthesis; biotin biosynthesis; biotin from 7,8-diaminononanoate: step 2/2. Its function is as follows. Catalyzes the conversion of dethiobiotin (DTB) to biotin by the insertion of a sulfur atom into dethiobiotin via a radical-based mechanism. This Aeromonas salmonicida (strain A449) protein is Biotin synthase.